The primary structure comprises 276 residues: Small ribosomal subunit protein uS2 (276 aa).

Ser-2 carries the N-acetylserine modification.

This sequence belongs to the universal ribosomal protein uS2 family. Component of the small ribosomal subunit. Mature ribosomes consist of a small (40S) and a large (60S) subunit. The 40S subunit contains about 33 different proteins and 1 molecule of RNA (18S). The 60S subunit contains about 49 different proteins and 3 molecules of RNA (28S, 5.8S and 5S). Interacts with rps-21.

The protein resides in the cytoplasm. Functionally, required for the assembly and/or stability of the 40S ribosomal subunit. Required for the processing of the 20S rRNA-precursor to mature 18S rRNA in a late step of the maturation of 40S ribosomal subunits. Involved in cold-warm shock-induced translocation of the RNA exosome components from the nucleolus to nucleoplasm. In Caenorhabditis elegans, this protein is Small ribosomal subunit protein uS2.